Reading from the N-terminus, the 318-residue chain is Probable serine/threonine-protein kinase MRK1 homolog (318 aa).

Residues Tyr40–Phe313 form the Protein kinase domain. Residues Ile46–Val54 and Lys68 contribute to the ATP site. Asp159 acts as the Proton acceptor in catalysis.

This sequence belongs to the protein kinase superfamily. CMGC Ser/Thr protein kinase family. GSK-3 subfamily.

The protein resides in the cytoplasm. Its subcellular location is the nucleus. It carries out the reaction L-seryl-[protein] + ATP = O-phospho-L-seryl-[protein] + ADP + H(+). The enzyme catalyses L-threonyl-[protein] + ATP = O-phospho-L-threonyl-[protein] + ADP + H(+). May play a role in the initiation and completion of mitosis. The polypeptide is Probable serine/threonine-protein kinase MRK1 homolog (MRK1) (Encephalitozoon cuniculi (strain GB-M1) (Microsporidian parasite)).